A 247-amino-acid chain; its full sequence is TLC domain-containing protein 1 (247 aa).

The signal sequence occupies residues 1 to 27 (MPLLLHPAWPLLLGATLTFRALRRVLC). The Extracellular portion of the chain corresponds to 28–46 (RLPLPAHVQTDPLRTWRWH). A TLC domain is found at 40–234 (LRTWRWHNLL…LLRSDFCPER (195 aa)). Residues 47–67 (NLLVSFTHSIVSGIWALLCIW) traverse the membrane as a helical segment. The Cytoplasmic portion of the chain corresponds to 68–83 (QTPEMLVEIETAWSVC). A helical transmembrane segment spans residues 84-104 (GYLLVCFSAGYFIHDTVDIVV). Over 105 to 123 (SRQTRASWEYLVHHVMAMG) the chain is Extracellular. Residues 124–144 (AFFSGIFWKRFVGGGVLTLLV) constitute an intramembrane region (helical). At 145–173 (EVSNIFLTLRMMMKINNAQDILLYKVNKY) the chain is on the extracellular side. The chain crosses the membrane as a helical span at residues 174–194 (VNLVMYFLFRLAPQAYLTKFF). Residues 195-201 (LQYAGQR) are Cytoplasmic-facing. The helical transmembrane segment at 202–222 (TLGTFLLSILLMLDVMILIYF) threads the bilayer. Over 223–247 (SRLLRSDFCPERAPSRQQKDKFLTE) the chain is Extracellular.

It localises to the cell membrane. Functionally, regulates the composition and fluidity of the plasma membrane. Inhibits the incorporation of membrane-fluidizing phospholipids containing omega-3 long-chain polyunsaturated fatty acids (LCPUFA) and thereby promotes membrane rigidity. Does not appear to have any effect on LCPUFA synthesis. The protein is TLC domain-containing protein 1 (Tlcd1) of Rattus norvegicus (Rat).